The following is a 28-amino-acid chain: Alpha-(1-6)-linked fucose-specific lectin (28 aa).

Homohexamer. In terms of tissue distribution, expressed by mycelium-forming spores.

It localises to the secreted. Its function is as follows. Alpha-(1-6)-linked L-fucose specific lectin. The sequence is that of Alpha-(1-6)-linked fucose-specific lectin from Rhizopus stolonifer (Rhizopus nigricans).